Consider the following 2593-residue polypeptide: Citrinin polyketide synthase (2593 aa).

The N-terminal acylcarrier protein transacylase domain (SAT) stretch occupies residues 70–224 (KLLENLNAWI…YVSVIVDQRR (155 aa)). Cys-139 functions as the Nucleophile; for transacylase activity in the catalytic mechanism. The active-site Proton donor/acceptor; for transacylase activity is the His-258. A Ketosynthase family 3 (KS3) domain is found at 391–806 (DERIAVIGMA…GSNASMVVTQ (416 aa)). Catalysis depends on for beta-ketoacyl synthase activity residues Cys-555, His-690, and His-729. Residues 906–1191 (PDPKPVILCF…VAIWLEAGSN (286 aa)) are malonyl-CoA:ACP transacylase (MAT) domain. An N-terminal hotdog fold region spans residues 1291–1424 (PKGLTTFVGY…GTITFQAADS (134 aa)). One can recognise a PKS/mFAS DH domain in the interval 1291–1603 (PKGLTTFVGY…YQKVSISGIR (313 aa)). The interval 1322 to 1601 (LLSGHIMANA…ISYQKVSISG (280 aa)) is product template (PT) domain. Catalysis depends on His-1326, which acts as the Proton acceptor; for dehydratase activity. The interval 1451–1603 (VADDILQGRN…YQKVSISGIR (153 aa)) is C-terminal hotdog fold. Asp-1508 functions as the Proton donor; for dehydratase activity in the catalytic mechanism. The tract at residues 1636-1662 (VADSPLVDGSSTAVSGTPPTKKAPKAP) is disordered. The 78-residue stretch at 1661–1738 (APSVDITGKM…SLVECMQRIL (78 aa)) folds into the Carrier domain. The residue at position 1689 (Ser-1689) is an O-(pantetheine 4'-phosphoryl)serine. Active-site for methyltransferase activity residues include Tyr-1955, His-2067, and Glu-2093. The interval 1960–2134 (INAVWIQQAE…ATHWKKILTS (175 aa)) is methyltransferase (CMeT) domain. The interval 2215–2459 (PAPTGHCVLV…KALPDFDGSL (245 aa)) is NADPH-binding (R) domain.

Pantetheine 4'-phosphate is required as a cofactor.

It participates in mycotoxin biosynthesis. Non-reducing polyketide synthase; part of the gene cluster that mediates the biosynthesis of the mycotoxin citrinin, a hepato-nephrotoxic compound to humans due to inhibition of respiration complex III. The pathway begins with the synthesis of a keto-aldehyde intermediate by the citrinin PKS (pksCT) from successive condensations of 4 malonyl-CoA units, presumably with a simple acetyl-CoA starter unit. Release of the keto-aldehyde intermediate is consistent with the presence of the C-terminal reductive release domain. Mp11 collaborates with pksCT by catalyzing the hydrolysis of ACP-bound acyl intermediates to free the ACP from stalled intermediates. Mpl2 then catalyzes the oxidation of the C-12 methyl of the ketone intermediate to an alcohol intermediate which is further oxidized by the oxidoreductase mpl7 to produce a bisaldehyde intermediate. The fourth catalytic step is catalyzed by the mpl4 aldehyde dehydrogenase. The final transformation is the reduction of C-3 by mpl6 to provide the chemically stable citrinin nucleus. In Monascus purpureus (Red mold), this protein is Citrinin polyketide synthase.